We begin with the raw amino-acid sequence, 291 residues long: Transmembrane protein 41B (291 aa).

The interval 1-38 (MAKGRVAERSQMGADHTTPVGDGAAGTRGPAAPGSRDY) is disordered. The residue at position 18 (threonine 18) is a Phosphothreonine. Residues 21-34 (GDGAAGTRGPAAPG) are compositionally biased toward low complexity. Serine 35 is subject to Phosphoserine. 6 helical membrane passes run 52–72 (MSLL…FLVY), 109–129 (FYVQ…TFAI), 147–169 (LALF…LSYL), 197–217 (LINY…FINI), 225–245 (PLKV…FVAI), and 262–282 (SWNS…PAIF). Residues 140–251 (GFLYPFPLAL…FVAIKAGTTL (112 aa)) form a VTT domain; required for its function in autophagy region.

It belongs to the TMEM41 family. As to quaternary structure, interacts with VMP1. Interacts with COPA, COPB1, VDAC1 and ERLIN2. Interacts with ATG2A. Interacts with SURF4.

It is found in the endoplasmic reticulum membrane. Its subcellular location is the endomembrane system. The catalysed reaction is a 1,2-diacyl-sn-glycero-3-phospho-L-serine(in) = a 1,2-diacyl-sn-glycero-3-phospho-L-serine(out). It carries out the reaction cholesterol(in) = cholesterol(out). The enzyme catalyses a 1,2-diacyl-sn-glycero-3-phosphocholine(in) = a 1,2-diacyl-sn-glycero-3-phosphocholine(out). It catalyses the reaction a 1,2-diacyl-sn-glycero-3-phosphoethanolamine(in) = a 1,2-diacyl-sn-glycero-3-phosphoethanolamine(out). Functionally, phospholipid scramblase involved in lipid homeostasis and membrane dynamics processes. Has phospholipid scramblase activity toward cholesterol and phosphatidylserine, as well as phosphatidylethanolamine and phosphatidylcholine. Required for autophagosome formation: participates in early stages of autophagosome biogenesis at the endoplasmic reticulum (ER) membrane by reequilibrating the leaflets of the ER as lipids are extracted by ATG2 (ATG2A or ATG2B) to mediate autophagosome assembly. In addition to autophagy, involved in other processes in which phospholipid scramblase activity is required. Required for normal motor neuron development. The polypeptide is Transmembrane protein 41B (Pongo abelii (Sumatran orangutan)).